Here is a 471-residue protein sequence, read N- to C-terminus: MDYLPLFAELKQRPVLVIGGGEIAERKIKFLLRAQAQVQVVAETLSPALADLAARQALSWRATEFSDSLVDDVFLVIAATEDDALNQRVFAAANARYRLVNVVDNQALCSFVFPSIVDRSPLLVAISSSGKAPVLSRILREKIEALLPTNLGRLAESASYWRNHLKTRLTTTEARRRFWERVFTGRFASLMVAGNSAEAEKALQDELDKPERETGEIILVGAGPGDAGLLTLRGLQAIQQADVVFHDHLVTQPVLELVRRDAELICVGKRAGEHSVPQHETNQLLVEAAKAGKTVVRLKGGDPFIFGRGAEELQAAAEAGIPFQVVPGVTAAAGATAYAGIPLTHRDYAQSAVFVTGHYKPDSAPFDWSLLAKSQQTLAIYMGTMKAAEISAQLIAHGRDSDTPVAVISRGTRDDQQTITGTLQQLEHLAKDAPMPALLVVGEVVQLHQQLAWFQHTSSAEGFNASVVNLA.

Positions 1-203 are precorrin-2 dehydrogenase /sirohydrochlorin ferrochelatase; it reads MDYLPLFAEL…GNSAEAEKAL (203 aa). Residues 22 to 23 and 43 to 44 contribute to the NAD(+) site; these read EI and ET. Residue Ser-128 is modified to Phosphoserine. The uroporphyrinogen-III C-methyltransferase stretch occupies residues 215 to 471; it reads GEIILVGAGP…GFNASVVNLA (257 aa). An S-adenosyl-L-methionine-binding site is contributed by Pro-224. Residue Asp-247 is the Proton acceptor of the active site. Residue Lys-269 is the Proton donor of the active site. S-adenosyl-L-methionine contacts are provided by residues 300 to 302, Ile-305, 330 to 331, Met-382, and Gly-411; these read GGD and TA.

This sequence in the N-terminal section; belongs to the precorrin-2 dehydrogenase / sirohydrochlorin ferrochelatase family. In the C-terminal section; belongs to the precorrin methyltransferase family.

The enzyme catalyses uroporphyrinogen III + 2 S-adenosyl-L-methionine = precorrin-2 + 2 S-adenosyl-L-homocysteine + H(+). It catalyses the reaction precorrin-2 + NAD(+) = sirohydrochlorin + NADH + 2 H(+). The catalysed reaction is siroheme + 2 H(+) = sirohydrochlorin + Fe(2+). It functions in the pathway cofactor biosynthesis; adenosylcobalamin biosynthesis; precorrin-2 from uroporphyrinogen III: step 1/1. Its pathway is cofactor biosynthesis; adenosylcobalamin biosynthesis; sirohydrochlorin from precorrin-2: step 1/1. The protein operates within porphyrin-containing compound metabolism; siroheme biosynthesis; precorrin-2 from uroporphyrinogen III: step 1/1. It participates in porphyrin-containing compound metabolism; siroheme biosynthesis; siroheme from sirohydrochlorin: step 1/1. It functions in the pathway porphyrin-containing compound metabolism; siroheme biosynthesis; sirohydrochlorin from precorrin-2: step 1/1. Its function is as follows. Multifunctional enzyme that catalyzes the SAM-dependent methylations of uroporphyrinogen III at position C-2 and C-7 to form precorrin-2 via precorrin-1. Then it catalyzes the NAD-dependent ring dehydrogenation of precorrin-2 to yield sirohydrochlorin. Finally, it catalyzes the ferrochelation of sirohydrochlorin to yield siroheme. The protein is Siroheme synthase 1 of Klebsiella pneumoniae subsp. pneumoniae (strain ATCC 700721 / MGH 78578).